Consider the following 307-residue polypeptide: Thymidylate synthase (307 aa).

Residue arginine 44 coordinates dUMP. Serine 108 is modified (phosphoserine). Residues 169-170 (RR), 189-190 (CH), 209-212 (RSGD), asparagine 220, and 250-252 (HIY) each bind dUMP. The active-site Nucleophile is cysteine 189. Position 212 (aspartate 212) interacts with (6R)-5,10-methylene-5,6,7,8-tetrahydrofolate. Glycyl lysine isopeptide (Lys-Gly) (interchain with G-Cter in SUMO2) cross-links involve residues lysine 286 and lysine 302. Alanine 306 is a (6R)-5,10-methylene-5,6,7,8-tetrahydrofolate binding site.

Belongs to the thymidylate synthase family. As to quaternary structure, homodimer.

It localises to the nucleus. Its subcellular location is the cytoplasm. The protein resides in the mitochondrion. The protein localises to the mitochondrion matrix. It is found in the mitochondrion inner membrane. It catalyses the reaction dUMP + (6R)-5,10-methylene-5,6,7,8-tetrahydrofolate = 7,8-dihydrofolate + dTMP. Its pathway is pyrimidine metabolism; dTTP biosynthesis. Functionally, catalyzes the reductive methylation of 2'-deoxyuridine 5'-monophosphate (dUMP) to thymidine 5'-monophosphate (dTMP), using the cosubstrate, 5,10- methylenetetrahydrofolate (CH2H4folate) as a 1-carbon donor and reductant and contributes to the de novo mitochondrial thymidylate biosynthesis pathway. The polypeptide is Thymidylate synthase (Tyms) (Mus musculus (Mouse)).